A 259-amino-acid polypeptide reads, in one-letter code: Pimeloyl-[acyl-carrier protein] methyl ester esterase (259 aa).

In terms of domain architecture, AB hydrolase-1 spans 16–244; it reads LVFIHGWGLN…ASHAPFLSHP (229 aa). Substrate contacts are provided by residues Trp-22, 82–83, and 143–147; these read SL and FFNIQ. Catalysis depends on Ser-82, which acts as the Nucleophile. Residues Asp-207 and His-237 contribute to the active site. Position 237 (His-237) interacts with substrate.

It belongs to the AB hydrolase superfamily. Carboxylesterase BioH family. In terms of assembly, monomer.

The protein localises to the cytoplasm. It catalyses the reaction 6-carboxyhexanoyl-[ACP] methyl ester + H2O = 6-carboxyhexanoyl-[ACP] + methanol + H(+). It functions in the pathway cofactor biosynthesis; biotin biosynthesis. In terms of biological role, the physiological role of BioH is to remove the methyl group introduced by BioC when the pimeloyl moiety is complete. It allows to synthesize pimeloyl-ACP via the fatty acid synthetic pathway through the hydrolysis of the ester bonds of pimeloyl-ACP esters. The chain is Pimeloyl-[acyl-carrier protein] methyl ester esterase from Wigglesworthia glossinidia brevipalpis.